Here is a 139-residue protein sequence, read N- to C-terminus: Aspartate 1-decarboxylase (139 aa).

The active-site Schiff-base intermediate with substrate; via pyruvic acid is the serine 25. The residue at position 25 (serine 25) is a Pyruvic acid (Ser). Threonine 57 provides a ligand contact to substrate. Catalysis depends on tyrosine 58, which acts as the Proton donor. 73–75 (GAA) is a substrate binding site. The segment at 117–139 (LGADPAEPVPGSDQARSPQAVTA) is disordered. Polar residues predominate over residues 130-139 (QARSPQAVTA).

Belongs to the PanD family. As to quaternary structure, heterooctamer of four alpha and four beta subunits. Requires pyruvate as cofactor. In terms of processing, is synthesized initially as an inactive proenzyme, which is activated by self-cleavage at a specific serine bond to produce a beta-subunit with a hydroxyl group at its C-terminus and an alpha-subunit with a pyruvoyl group at its N-terminus.

It localises to the cytoplasm. It carries out the reaction L-aspartate + H(+) = beta-alanine + CO2. Its pathway is cofactor biosynthesis; (R)-pantothenate biosynthesis; beta-alanine from L-aspartate: step 1/1. In terms of biological role, catalyzes the pyruvoyl-dependent decarboxylation of aspartate to produce beta-alanine. The sequence is that of Aspartate 1-decarboxylase from Streptomyces avermitilis (strain ATCC 31267 / DSM 46492 / JCM 5070 / NBRC 14893 / NCIMB 12804 / NRRL 8165 / MA-4680).